Reading from the N-terminus, the 162-residue chain is UPF0260 protein Atu0932 (162 aa).

It belongs to the UPF0260 family.

The polypeptide is UPF0260 protein Atu0932 (Agrobacterium fabrum (strain C58 / ATCC 33970) (Agrobacterium tumefaciens (strain C58))).